Consider the following 92-residue polypeptide: Small ribosomal subunit protein uS19 (92 aa).

This sequence belongs to the universal ribosomal protein uS19 family.

Its function is as follows. Protein S19 forms a complex with S13 that binds strongly to the 16S ribosomal RNA. This is Small ribosomal subunit protein uS19 from Desulfosudis oleivorans (strain DSM 6200 / JCM 39069 / Hxd3) (Desulfococcus oleovorans).